The following is a 334-amino-acid chain: E3 ubiquitin-protein ligase ATL4 (334 aa).

The disordered stretch occupies residues 1-20; sequence MESLINPSHGGGNYDSHSSS. The helical transmembrane segment at 28–48 threads the bilayer; that stretch reads VLVIILILLMTLLISVSICFL. The RING-type; atypical zinc-finger motif lies at 117 to 159; the sequence is CAVCLSKFEPEDQLRLLPLCCHAFHADCIDIWLVSNQTCPLCR.

It belongs to the RING-type zinc finger family. ATL subfamily.

It localises to the membrane. The enzyme catalyses S-ubiquitinyl-[E2 ubiquitin-conjugating enzyme]-L-cysteine + [acceptor protein]-L-lysine = [E2 ubiquitin-conjugating enzyme]-L-cysteine + N(6)-ubiquitinyl-[acceptor protein]-L-lysine.. The protein operates within protein modification; protein ubiquitination. E3 ubiquitin-protein ligase able to catalyze polyubiquitination with ubiquitin-conjugating enzyme E2 UBC8 in vitro. In Arabidopsis thaliana (Mouse-ear cress), this protein is E3 ubiquitin-protein ligase ATL4.